A 191-amino-acid polypeptide reads, in one-letter code: Peptidyl-tRNA hydrolase (191 aa).

Residue Y14 participates in tRNA binding. H19 (proton acceptor) is an active-site residue. 3 residues coordinate tRNA: Y64, N66, and N112.

This sequence belongs to the PTH family. Monomer.

The protein resides in the cytoplasm. The catalysed reaction is an N-acyl-L-alpha-aminoacyl-tRNA + H2O = an N-acyl-L-amino acid + a tRNA + H(+). Its function is as follows. Hydrolyzes ribosome-free peptidyl-tRNAs (with 1 or more amino acids incorporated), which drop off the ribosome during protein synthesis, or as a result of ribosome stalling. Catalyzes the release of premature peptidyl moieties from peptidyl-tRNA molecules trapped in stalled 50S ribosomal subunits, and thus maintains levels of free tRNAs and 50S ribosomes. The protein is Peptidyl-tRNA hydrolase of Clostridium botulinum (strain Alaska E43 / Type E3).